A 432-amino-acid polypeptide reads, in one-letter code: MLTDTLNTTKSEEIFAAAQKLMPGGVSSPVRAFKSVGGQPIVFDRVKGAHVWDVDGNQYIDYVGTWGPAICGHAHPEVLTALKEALDKGTSFGAPCLLENVLAEMVIDAVPSVEVVRFVNSGTEACMSVLRLMRAFTGREKVIKFEGCYHGHADMFLVKAGSGVATLGLPDSPGVPKSVTGNTLTAPYNDLQSVQALFSQHPDQIAGVILEPVVGNAGFIPPDAGFLEGLREITKENGALLVFDEVMTGFRISYGGAQEKFGITPDLTTLGKVIGGGLPVGAYGGRRDIMSMVAPAGPMYQAGTLSGNPLAMTAGIKTLELLRRSGTYDQLDRVTGKLISGLLQIAREAGHEVCGGHINGMFGMFFAPGPVHSYDDAKAADAAKFAKFHRGMLEQGVYLAPSQFEAGFTSLAHTDADIDQTLEAAKVVLANI.

Lysine 272 carries the post-translational modification N6-(pyridoxal phosphate)lysine.

The protein belongs to the class-III pyridoxal-phosphate-dependent aminotransferase family. HemL subfamily. In terms of assembly, homodimer. Pyridoxal 5'-phosphate serves as cofactor.

Its subcellular location is the cytoplasm. It carries out the reaction (S)-4-amino-5-oxopentanoate = 5-aminolevulinate. It functions in the pathway porphyrin-containing compound metabolism; protoporphyrin-IX biosynthesis; 5-aminolevulinate from L-glutamyl-tRNA(Glu): step 2/2. Its pathway is porphyrin-containing compound metabolism; chlorophyll biosynthesis. The chain is Glutamate-1-semialdehyde 2,1-aminomutase from Acaryochloris marina (strain MBIC 11017).